Consider the following 229-residue polypeptide: MDAKIKPIRGTNPAEGRPEFQPAELEPSEFLEVAVQPDQPRPSRAEAEAAVKTLLSYIGENTEREGLIDTPRRVVEAYDELFQGYHQCPKEVLERTFGETAGYDDFVLVRNISFTSHCEHHVMPFYGKAHIAYTPVERVVGLSKLARLVDIFARRLQTQEHLTAQIAAAIDEVLKPRGVAVLLEAEHTCMSVRGIAKKGATTFTSRYTGVFRDNPAEQARFMSMVRDRG.

Residues 1–26 (MDAKIKPIRGTNPAEGRPEFQPAELE) are disordered. Zn(2+) contacts are provided by C118, H121, and C189.

This sequence belongs to the GTP cyclohydrolase I family. In terms of assembly, toroid-shaped homodecamer, composed of two pentamers of five dimers.

The enzyme catalyses GTP + H2O = 7,8-dihydroneopterin 3'-triphosphate + formate + H(+). It functions in the pathway cofactor biosynthesis; 7,8-dihydroneopterin triphosphate biosynthesis; 7,8-dihydroneopterin triphosphate from GTP: step 1/1. In Rhodopseudomonas palustris (strain ATCC BAA-98 / CGA009), this protein is GTP cyclohydrolase 1.